The following is a 218-amino-acid chain: Cytidylate kinase (218 aa).

21-29 (GPAASGKGT) is an ATP binding site.

This sequence belongs to the cytidylate kinase family. Type 1 subfamily.

The protein localises to the cytoplasm. The catalysed reaction is CMP + ATP = CDP + ADP. The enzyme catalyses dCMP + ATP = dCDP + ADP. In Rickettsia canadensis (strain McKiel), this protein is Cytidylate kinase.